The sequence spans 382 residues: Succinyl-diaminopimelate desuccinylase (382 aa).

Histidine 73 is a binding site for Zn(2+). Residue aspartate 75 is part of the active site. Zn(2+) is bound at residue aspartate 106. Residue glutamate 140 is the Proton acceptor of the active site. Glutamate 141, glutamate 169, and histidine 355 together coordinate Zn(2+).

Belongs to the peptidase M20A family. DapE subfamily. As to quaternary structure, homodimer. It depends on Zn(2+) as a cofactor. Requires Co(2+) as cofactor.

The enzyme catalyses N-succinyl-(2S,6S)-2,6-diaminopimelate + H2O = (2S,6S)-2,6-diaminopimelate + succinate. The protein operates within amino-acid biosynthesis; L-lysine biosynthesis via DAP pathway; LL-2,6-diaminopimelate from (S)-tetrahydrodipicolinate (succinylase route): step 3/3. Functionally, catalyzes the hydrolysis of N-succinyl-L,L-diaminopimelic acid (SDAP), forming succinate and LL-2,6-diaminopimelate (DAP), an intermediate involved in the bacterial biosynthesis of lysine and meso-diaminopimelic acid, an essential component of bacterial cell walls. This is Succinyl-diaminopimelate desuccinylase from Cellvibrio japonicus (strain Ueda107) (Pseudomonas fluorescens subsp. cellulosa).